The primary structure comprises 329 residues: uncharacterized protein (329 aa).

One can recognise an SIS domain in the interval 37–180 (LAEKILGHSG…AMLLFHSRGV (144 aa)). 52 to 57 (GVGKSG) is an ATP binding site. CBS domains are found at residues 206–265 (MFPK…GGEV) and 274–329 (MTAN…AGLL).

This sequence belongs to the SIS family. GutQ/KpsF subfamily.

This is an uncharacterized protein from Chlamydia pneumoniae (Chlamydophila pneumoniae).